Reading from the N-terminus, the 260-residue chain is Putative ATP-binding protein BAB2_1147 (260 aa).

Positions 5–228 (ISFNNVVMRY…DLPYPRTEAI (224 aa)) constitute an ABC transporter domain. An ATP-binding site is contributed by 37–44 (GPSGCGKS).

It belongs to the ABC transporter superfamily. The complex is composed of two ATP-binding proteins (BAB2_1147), two transmembrane proteins (BAB2_1148) and a solute-binding protein (BAB2_1146).

It localises to the cell inner membrane. Its function is as follows. Probably part of an ABC transporter complex. Probably Responsible for energy coupling to the transport system. The protein is Putative ATP-binding protein BAB2_1147 of Brucella abortus (strain 2308).